Reading from the N-terminus, the 389-residue chain is uncharacterized protein (389 aa).

Residues 1–29 form the signal peptide; the sequence is MQPSFTPSGGKWLSIAVILLVIGLVVGFA.

The protein belongs to the bacterial solute-binding protein 1 family. WtpA subfamily.

This is an uncharacterized protein from Thermoplasma volcanium (strain ATCC 51530 / DSM 4299 / JCM 9571 / NBRC 15438 / GSS1).